The chain runs to 354 residues: Protein RecA (354 aa).

Residue 65-72 (GPESSGKT) coordinates ATP.

Belongs to the RecA family.

It localises to the cytoplasm. Its function is as follows. Can catalyze the hydrolysis of ATP in the presence of single-stranded DNA, the ATP-dependent uptake of single-stranded DNA by duplex DNA, and the ATP-dependent hybridization of homologous single-stranded DNAs. It interacts with LexA causing its activation and leading to its autocatalytic cleavage. The chain is Protein RecA from Pseudomonas savastanoi pv. phaseolicola (strain 1448A / Race 6) (Pseudomonas syringae pv. phaseolicola (strain 1448A / Race 6)).